Consider the following 181-residue polypeptide: Nedd8-conjugating enzyme UbcE2M (181 aa).

Interaction with Uba3 regions lie at residues 4-7 (LFTL) and 24-54 (ASAAQLRIQKDINELNLPNTCATDFPDPNDL). One can recognise a UBC core domain in the interval 26 to 170 (AAQLRIQKDI…VKKAMRGGCV (145 aa)). Cys-108 serves as the catalytic Glycyl thioester intermediate.

It belongs to the ubiquitin-conjugating enzyme family. UBC12 subfamily. Interacts with Uba3. In terms of tissue distribution, expressed in the wing disk.

The catalysed reaction is [E1 NEDD8-activating enzyme]-S-[NEDD8 protein]-yl-L-cysteine + [E2 NEDD8-conjugating enzyme]-L-cysteine = [E1 NEDD8-activating enzyme]-L-cysteine + [E2 NEDD8-conjugating enzyme]-S-[NEDD8-protein]-yl-L-cysteine.. The protein operates within protein modification; protein neddylation. In terms of biological role, accepts the ubiquitin-like protein Nedd8 from the Uba3-APP-BP1 E1 complex and catalyzes its covalent attachment to other proteins. Required for Cul1 and Cul3 neddylation. Negatively regulates full-length ci stability and hedgehog signaling. In Drosophila melanogaster (Fruit fly), this protein is Nedd8-conjugating enzyme UbcE2M.